A 463-amino-acid chain; its full sequence is Endoglucanase (463 aa).

The first 27 residues, 1–27 (MVEKRKIFTVLCACGIGFTSYTSCISA), serve as a signal peptide directing secretion. The propeptide occupies 28 to 55 (AAIDNDTLINNGHKINSSIITNSSQVSA). Catalysis depends on Glu130, which acts as the Proton donor. Residue Asp191 is the Nucleophile of the active site.

It belongs to the glycosyl hydrolase 8 (cellulase D) family. In terms of processing, the N- and the C-terminus may be subjected to proteolysis.

The catalysed reaction is Endohydrolysis of (1-&gt;4)-beta-D-glucosidic linkages in cellulose, lichenin and cereal beta-D-glucans.. This chain is Endoglucanase, found in Bacillus sp. (strain KSM-330).